Here is a 1323-residue protein sequence, read N- to C-terminus: MRELQGDDSSRKSPPSDSVVKNSSPIDYEHSLKSLQDERTLNYPNKQFNSENPSSYYNMDDSGELCNFELEKDSLESMIHESSTALSAQSNTAQDGDQLASSSTISKDHSETLDNKLNDSKILIKKASNSFANFSESVRSSTIVAYSQTPTQRLQGLTSISSSSFDDGSYGSRRISFNSQGVSGRLRRNMDSTVIIPSEDEDLQLPSNSNSNVEYGPFDSTTFDRQLSIEVNQPVGAMSLSPCGRDIALASRYGLLVLDLDNPYNPPRMLRHSTPWEVADTQWNVHAARDQWVVSTSSQKTIVWNLALPNDRAIEFMLHGHTRAVTDMNWHRQNPDVLATCSIDSSVHCWDLRSPRFPVNSFYDWHNGATQVKWNYKNPHILASSHGRLVRIWDDRYGSAPLHTIKTSENITKINGLEFNRACETRLLTCAMDRTVKFWNYEKSTEEPEHLITTDSPVWKARFTPFGDGVILMPQRGDNSVHMYDCRNLDKEGPRAVHRFAGHTDQVKEFLWRCRGEDVFDRDLRDFQLITWSKDHHVRLWPIGNDILNSMGHDRTKPVPFKLTRLGAKYRTYSREPLKQSLINTECDSSDAMNSFDSNFGAERANTSDLSRGFVAFANRKKSKYNLPGSSGFMTRSTKSTNPMTPLNWLRGISMGRLGNADWEVPQNLGEELSWIGQKYSNVSFEKIDVAERTCTISLNAPILPDDGYAYIRLHVYFPNNYPISATPVFQLERSSAFNDEQFNYVFNTLTSISDQCISSHKYCMDACLSYLSGNLSVDEIWKLGFQKDNSDSSSESSADIFQDVFPSMPDFRGGDRGLSHKHQNIPLPKTCAAIFCGNDELVCFFTIKADESAAQATANRETHGRQKLFESFGVLDSSNSVADSDSTNYDDENSLNRGGTSESDSEFIWDVDESNSGSIVFPKSKTSINLNNINSASASIMGSRFGAADIFMSKRPSTKGSNRPSILLSKPSHDFHVVRIISMSKYLPVKRALAAEYVVDTGDKVTVCNKNAEVSAKHNYYRLAKVWLMLGRLLGHLSRTENKDHINDEEAFPWLKSPLAKWVVNSLLDYYASQCNTQMLAMLACVLDIPNPKKQSGNTSADQVLFNQPKQVTEKLGVQLNLPKTKILEKVSSHSLAQITALREKEPKDADSTYSKEKIFSATSTVHLQLMDYDKQNNDFVDAQEIAYTKLLQQKFIQWRATYAEQLDLWGFFIPKLEMLKFNAHEFSSPSEKTLVNHCNSCNSTTSNTRICEKCYSLVPRMSCTFCCLSIHGLCIVCGLCLHVMHEDCYKEWFSNGDSISQSCSSGCGCKCQFQHMSLEKV.

Positions 1 to 11 (MRELQGDDSSR) are enriched in basic and acidic residues. 2 disordered regions span residues 1-57 (MREL…SSYY) and 79-112 (IHES…HSET). The segment covering 12 to 21 (KSPPSDSVVK) has biased composition (low complexity). Serine 24 is subject to Phosphoserine. Over residues 27 to 40 (DYEHSLKSLQDERT) the composition is skewed to basic and acidic residues. Polar residues-rich tracts occupy residues 42 to 57 (NYPN…SSYY) and 80 to 105 (HESS…SSTI). WD repeat units follow at residues 271 to 314 (RHST…DRAI), 320 to 360 (GHTR…FPVN), 364 to 403 (DWHN…APLH), 409 to 449 (ENIT…EEPE), 453 to 494 (TTDS…KEGP), and 502 to 551 (GHTD…LNSM). The 109-residue stretch at 671–779 (EELSWIGQKY…SYLSGNLSVD (109 aa)) folds into the RWD domain. Residues 879 to 888 (SNSVADSDST) are compositionally biased toward polar residues. The tract at residues 879-904 (SNSVADSDSTNYDDENSLNRGGTSES) is disordered. An RING-type; degenerate zinc finger spans residues 1265–1309 (CTFCCLSIHGLCIVCGLCLHVMHEDCYKEWFSNGDSISQSCSSGC).

The protein belongs to the WD repeat WDR59 family.

May be involved in telomere capping. This is an uncharacterized protein from Schizosaccharomyces pombe (strain 972 / ATCC 24843) (Fission yeast).